Reading from the N-terminus, the 124-residue chain is Large ribosomal subunit protein bL20 (124 aa).

This sequence belongs to the bacterial ribosomal protein bL20 family.

In terms of biological role, binds directly to 23S ribosomal RNA and is necessary for the in vitro assembly process of the 50S ribosomal subunit. It is not involved in the protein synthesizing functions of that subunit. The sequence is that of Large ribosomal subunit protein bL20 (rplT) from Mycoplasma genitalium (strain ATCC 33530 / DSM 19775 / NCTC 10195 / G37) (Mycoplasmoides genitalium).